A 303-amino-acid chain; its full sequence is Nitrogenase iron protein (303 aa).

Residue 11–18 (GKGGIGKS) participates in ATP binding. Residue cysteine 112 participates in [4Fe-4S] cluster binding. Arginine 115 carries the ADP-ribosylarginine; by dinitrogenase reductase ADP-ribosyltransferase modification. Residue cysteine 147 coordinates [4Fe-4S] cluster.

The protein belongs to the NifH/BchL/ChlL family. In terms of assembly, homodimer. The cofactor is [4Fe-4S] cluster. In terms of processing, the reversible ADP-ribosylation of Arg-115 inactivates the nitrogenase reductase and regulates nitrogenase activity.

The catalysed reaction is N2 + 8 reduced [2Fe-2S]-[ferredoxin] + 16 ATP + 16 H2O = H2 + 8 oxidized [2Fe-2S]-[ferredoxin] + 2 NH4(+) + 16 ADP + 16 phosphate + 6 H(+). Its function is as follows. The key enzymatic reactions in nitrogen fixation are catalyzed by the nitrogenase complex, which has 2 components: the iron protein and the molybdenum-iron protein. This chain is Nitrogenase iron protein, found in Wolinella succinogenes (strain ATCC 29543 / DSM 1740 / CCUG 13145 / JCM 31913 / LMG 7466 / NCTC 11488 / FDC 602W) (Vibrio succinogenes).